Reading from the N-terminus, the 342-residue chain is Phenylalanine--tRNA ligase alpha subunit (342 aa).

Glu-260 serves as a coordination point for Mg(2+).

It belongs to the class-II aminoacyl-tRNA synthetase family. Phe-tRNA synthetase alpha subunit type 1 subfamily. In terms of assembly, tetramer of two alpha and two beta subunits. Requires Mg(2+) as cofactor.

It localises to the cytoplasm. The catalysed reaction is tRNA(Phe) + L-phenylalanine + ATP = L-phenylalanyl-tRNA(Phe) + AMP + diphosphate + H(+). This is Phenylalanine--tRNA ligase alpha subunit from Mycobacterium avium (strain 104).